Here is a 152-residue protein sequence, read N- to C-terminus: Large ribosomal subunit protein uL15 (152 aa).

Residues 1–66 (MLQLHTIKPN…PLHRRLPKKG (66 aa)) are disordered. Residues 24-36 (ESSGLGKTCGKGN) are compositionally biased toward gly residues.

Belongs to the universal ribosomal protein uL15 family. Part of the 50S ribosomal subunit.

Its function is as follows. Binds to the 23S rRNA. This is Large ribosomal subunit protein uL15 from Akkermansia muciniphila (strain ATCC BAA-835 / DSM 22959 / JCM 33894 / BCRC 81048 / CCUG 64013 / CIP 107961 / Muc).